Here is an 819-residue protein sequence, read N- to C-terminus: Protein O-mannosyl-transferase tmem260 (819 aa).

Over residues 1–10 (MNNSPTLSNT) the composition is skewed to polar residues. Positions 1–68 (MNNSPTLSNT…NNNNNIINVN (68 aa)) are disordered. Over residues 15–68 (NNNNNSNSNSNSNNNNNNNNNNNNNSNNNNNNNNNVNRNVNNRNNNNNNIINVN) the composition is skewed to low complexity. 3 N-linked (GlcNAc...) asparagine glycosylation sites follow: Asn-18, Asn-38, and Asn-70. 7 consecutive transmembrane segments (helical) span residues 113–133 (IACI…TQYP), 152–172 (VAHP…SHII), 185–205 (FMSS…VYLW), 210–230 (WCGL…MYQI), 232–252 (GEVF…GVWY), 285–305 (LTNQ…LMFI), and 316–336 (ILSN…LLFI). Asn-349 carries N-linked (GlcNAc...) asparagine glycosylation. 4 helical membrane passes run 391-411 (LIIQ…LNLL), 427-447 (MIIF…NLPI), 459-479 (FFMQ…KSIF), and 505-525 (YLLP…NYNL). Asn-531, Asn-686, Asn-693, and Asn-783 each carry an N-linked (GlcNAc...) asparagine glycan.

It belongs to the glycosyltransferase 117 (GT117) family.

It localises to the endoplasmic reticulum membrane. The enzyme catalyses a di-trans,poly-cis-dolichyl beta-D-mannosyl phosphate + L-seryl-[protein] = 3-O-(alpha-D-mannosyl)-L-seryl-[protein] + a di-trans,poly-cis-dolichyl phosphate + H(+). It carries out the reaction a di-trans,poly-cis-dolichyl beta-D-mannosyl phosphate + L-threonyl-[protein] = 3-O-(alpha-D-mannosyl)-L-threonyl-[protein] + a di-trans,poly-cis-dolichyl phosphate + H(+). Functionally, O-mannosyl-transferase that transfers mannosyl residues to the hydroxyl group of serine or threonine residues of proteins. The sequence is that of Protein O-mannosyl-transferase tmem260 from Dictyostelium discoideum (Social amoeba).